A 653-amino-acid polypeptide reads, in one-letter code: Multidomain regulatory protein MT1410 (653 aa).

The PAC domain maps to S86 to A142. The PPM-type phosphatase domain maps to D177 to R396. D211, V212, D328, and D387 together coordinate Mn(2+). Positions R397–Q544 are anti-sigma factor kinase region. An STAS domain is found at I546–E653. S600 is subject to Phosphoserine.

It depends on Mg(2+) as a cofactor. Mn(2+) serves as cofactor. Post-translationally, autophosphorylated.

The enzyme catalyses O-phospho-L-seryl-[protein] + H2O = L-seryl-[protein] + phosphate. It carries out the reaction O-phospho-L-threonyl-[protein] + H2O = L-threonyl-[protein] + phosphate. The catalysed reaction is L-seryl-[protein] + ATP = O-phospho-L-seryl-[protein] + ADP + H(+). It catalyses the reaction L-threonyl-[protein] + ATP = O-phospho-L-threonyl-[protein] + ADP + H(+). Primarily acts as an independent SigF regulator that is sensitive to the osmosensory signal, mediating the cross talk of PknD with the SigF regulon. Possesses both phosphatase and kinase activities. The kinase domain functions as a classic anti-sigma factor-like kinase to phosphorylate the anti-anti-sigma factor domain at the canonical regulatory site, and the phosphatase domain antagonizes this activity. The polypeptide is Multidomain regulatory protein MT1410 (Mycobacterium tuberculosis (strain CDC 1551 / Oshkosh)).